A 182-amino-acid chain; its full sequence is ADP-ribosylation factor 1 (182 aa).

G2 is lipidated: N-myristoyl glycine. Positions 3-16 (NVFANLFKGLFGKK) are important for the stable binding to the membranes. Residues 24–32 (GLDAAGKTT), 126–129 (NKQD), and A160 contribute to the GTP site.

It belongs to the small GTPase superfamily. Arf family.

The protein localises to the golgi apparatus membrane. It is found in the cytoplasm. It localises to the cytosol. The catalysed reaction is GTP + H2O = GDP + phosphate + H(+). Its activity is regulated as follows. Alternates between an inactive GDP-bound form and an active GTP-bound form. Activated by a guanine nucleotide-exchange factor (GEF) and inactivated by GTPase-activating protein (GAP). In terms of biological role, small GTPase involved in protein trafficking between different compartments. Modulates vesicle budding and uncoating within the Golgi complex. In its GTP-bound form, triggers the recruitment of coatomer proteins to the Golgi membrane. The hydrolysis of ARF1-bound GTP, which is mediated by ARFGAPs proteins, is required for dissociation of coat proteins from Golgi membranes and vesicles. Has a role in eye development. Required for cleavage furrow ingression in embryonic cells. The chain is ADP-ribosylation factor 1 from Drosophila melanogaster (Fruit fly).